We begin with the raw amino-acid sequence, 389 residues long: Sulfate adenylyltransferase (389 aa).

The protein belongs to the sulfate adenylyltransferase family.

The catalysed reaction is sulfate + ATP + H(+) = adenosine 5'-phosphosulfate + diphosphate. It participates in sulfur metabolism; hydrogen sulfide biosynthesis; sulfite from sulfate: step 1/3. The sequence is that of Sulfate adenylyltransferase from Hyperthermus butylicus (strain DSM 5456 / JCM 9403 / PLM1-5).